We begin with the raw amino-acid sequence, 812 residues long: G patch domain-containing protein 1 homolog (812 aa).

Residues Met-1–Arg-42 are disordered. The span at Gln-29 to Gly-40 shows a compositional bias: basic and acidic residues. Residues Ser-145–Lys-191 enclose the G-patch domain. 2 disordered regions span residues Ala-384–Glu-416 and Asn-584–Lys-812. The segment covering Ile-586–Ser-609 has biased composition (basic and acidic residues). 2 stretches are compositionally biased toward acidic residues: residues Asp-610–Ala-630 and Asp-653–Glu-668. A compositionally biased stretch (basic and acidic residues) spans Glu-669 to Gln-720. Positions Met-761–Ser-794 are enriched in basic residues. Positions Asp-800–Lys-812 are enriched in acidic residues.

This sequence belongs to the GPATCH1 family.

This is G patch domain-containing protein 1 homolog from Caenorhabditis elegans.